We begin with the raw amino-acid sequence, 208 residues long: uncharacterized protein (208 aa).

To E.coli YfjJ.

This is an uncharacterized protein from Escherichia coli (strain K12).